Consider the following 296-residue polypeptide: 4-hydroxy-tetrahydrodipicolinate synthase (296 aa).

Residue threonine 46 coordinates pyruvate. The Proton donor/acceptor role is filled by tyrosine 134. Residue lysine 162 is the Schiff-base intermediate with substrate of the active site. Position 204 (isoleucine 204) interacts with pyruvate.

Belongs to the DapA family. As to quaternary structure, homotetramer; dimer of dimers.

It is found in the cytoplasm. It catalyses the reaction L-aspartate 4-semialdehyde + pyruvate = (2S,4S)-4-hydroxy-2,3,4,5-tetrahydrodipicolinate + H2O + H(+). Its pathway is amino-acid biosynthesis; L-lysine biosynthesis via DAP pathway; (S)-tetrahydrodipicolinate from L-aspartate: step 3/4. Functionally, catalyzes the condensation of (S)-aspartate-beta-semialdehyde [(S)-ASA] and pyruvate to 4-hydroxy-tetrahydrodipicolinate (HTPA). The protein is 4-hydroxy-tetrahydrodipicolinate synthase of Clostridium novyi (strain NT).